The chain runs to 370 residues: Chaperone protein DnaJ (370 aa).

The 65-residue stretch at 6-70 (DFYEILGVSK…QKRANYDQFG (65 aa)) folds into the J domain. The CR-type zinc finger occupies 134-216 (GANKSVTLNV…CHGKGFNTKR (83 aa)). The Zn(2+) site is built by cysteine 147, cysteine 150, cysteine 164, cysteine 167, cysteine 190, cysteine 193, cysteine 204, and cysteine 207. CXXCXGXG motif repeat units lie at residues 147 to 154 (CTSCHGSG), 164 to 171 (CSRCGGTG), 190 to 197 (CPDCGGSG), and 204 to 211 (CGECHGKG).

This sequence belongs to the DnaJ family. Homodimer. Requires Zn(2+) as cofactor.

The protein localises to the cytoplasm. Functionally, participates actively in the response to hyperosmotic and heat shock by preventing the aggregation of stress-denatured proteins and by disaggregating proteins, also in an autonomous, DnaK-independent fashion. Unfolded proteins bind initially to DnaJ; upon interaction with the DnaJ-bound protein, DnaK hydrolyzes its bound ATP, resulting in the formation of a stable complex. GrpE releases ADP from DnaK; ATP binding to DnaK triggers the release of the substrate protein, thus completing the reaction cycle. Several rounds of ATP-dependent interactions between DnaJ, DnaK and GrpE are required for fully efficient folding. Also involved, together with DnaK and GrpE, in the DNA replication of plasmids through activation of initiation proteins. This Erysipelothrix rhusiopathiae protein is Chaperone protein DnaJ.